The sequence spans 111 residues: Probable 4-amino-4-deoxy-L-arabinose-phosphoundecaprenol flippase subunit ArnE (111 aa).

A run of 3 helical transmembrane segments spans residues 39 to 59, 61 to 81, and 89 to 109; these read WLAI…WVLQ, VPVG…TLAA, and VSLR…CMGV. Positions 40–109 constitute an EamA domain; the sequence is LAISLLLLGG…IVAGVMCMGV (70 aa).

This sequence belongs to the ArnE family. Heterodimer of ArnE and ArnF.

The protein resides in the cell inner membrane. It functions in the pathway bacterial outer membrane biogenesis; lipopolysaccharide biosynthesis. Translocates 4-amino-4-deoxy-L-arabinose-phosphoundecaprenol (alpha-L-Ara4N-phosphoundecaprenol) from the cytoplasmic to the periplasmic side of the inner membrane. The chain is Probable 4-amino-4-deoxy-L-arabinose-phosphoundecaprenol flippase subunit ArnE from Sodalis glossinidius (strain morsitans).